Consider the following 77-residue polypeptide: U8-lycotoxin-Ls1q (77 aa).

An N-terminal signal peptide occupies residues 1 to 20 (MKLMIFAGLVLFAIVSLIEA). Positions 21-26 (QAEHEK) are excised as a propeptide.

It belongs to the neurotoxin 19 (CSTX) family. 08 (U8-Lctx) subfamily. Post-translationally, contains 4 disulfide bonds. As to expression, expressed by the venom gland.

Its subcellular location is the secreted. This is U8-lycotoxin-Ls1q from Lycosa singoriensis (Wolf spider).